The sequence spans 251 residues: Outer membrane protein assembly factor BamD (251 aa).

The signal sequence occupies residues 1 to 19 (MKLTKLLSALLVIGLVLGG). Cys-20 carries the N-palmitoyl cysteine lipid modification. Residue Cys-20 is the site of S-diacylglycerol cysteine attachment. TPR repeat units lie at residues 33-66 (IATL…HPGN), 70-103 (PQAE…HPAN), and 166-199 (AGKE…YQTT).

Belongs to the BamD family. In terms of assembly, part of the Bam complex.

Its subcellular location is the cell outer membrane. In terms of biological role, part of the outer membrane protein assembly complex, which is involved in assembly and insertion of beta-barrel proteins into the outer membrane. This chain is Outer membrane protein assembly factor BamD, found in Rickettsia prowazekii (strain Madrid E).